The sequence spans 113 residues: Small ribosomal subunit protein bS6 (113 aa).

Belongs to the bacterial ribosomal protein bS6 family.

Its function is as follows. Binds together with bS18 to 16S ribosomal RNA. The protein is Small ribosomal subunit protein bS6 of Flavobacterium johnsoniae (strain ATCC 17061 / DSM 2064 / JCM 8514 / BCRC 14874 / CCUG 350202 / NBRC 14942 / NCIMB 11054 / UW101) (Cytophaga johnsonae).